The chain runs to 268 residues: NH(3)-dependent NAD(+) synthetase (268 aa).

46–53 is a binding site for ATP; that stretch reads GISGGQDS. Asp-52 contributes to the Mg(2+) binding site. Residue Arg-140 participates in deamido-NAD(+) binding. Thr-160 contributes to the ATP binding site. Glu-165 provides a ligand contact to Mg(2+). Deamido-NAD(+)-binding residues include Lys-173 and Asp-180. The ATP site is built by Lys-189 and Thr-211. Residue 260–261 coordinates deamido-NAD(+); sequence HK.

This sequence belongs to the NAD synthetase family. Homodimer.

The enzyme catalyses deamido-NAD(+) + NH4(+) + ATP = AMP + diphosphate + NAD(+) + H(+). It participates in cofactor biosynthesis; NAD(+) biosynthesis; NAD(+) from deamido-NAD(+) (ammonia route): step 1/1. In terms of biological role, catalyzes the ATP-dependent amidation of deamido-NAD to form NAD. Uses ammonia as a nitrogen source. The sequence is that of NH(3)-dependent NAD(+) synthetase from Buchnera aphidicola subsp. Schizaphis graminum (strain Sg).